Reading from the N-terminus, the 181-residue chain is Probable calcium-binding protein CML43 (181 aa).

EF-hand domains lie at 24-59, 107-142, and 145-180; these read LNAL…LGLD, SPES…LGLP, and GEIE…VVVP. Ca(2+)-binding residues include aspartate 37, asparagine 39, aspartate 41, glutamate 48, aspartate 120, aspartate 122, aspartate 124, glutamate 131, aspartate 158, asparagine 160, aspartate 162, arginine 164, and glutamate 169.

In terms of tissue distribution, expressed specifically in roots.

In terms of biological role, calcium-binding protein that may mediate calcium-dependent signal during plant defense response. This chain is Probable calcium-binding protein CML43 (CML43), found in Arabidopsis thaliana (Mouse-ear cress).